Consider the following 763-residue polypeptide: 5-methyltetrahydropteroyltriglutamate--homocysteine methyltransferase (763 aa).

Residues 16-19 (RELK) and Lys114 contribute to the 5-methyltetrahydropteroyltri-L-glutamate site. L-homocysteine-binding positions include 438 to 440 (IGS) and Glu491. Residues 438 to 440 (IGS) and Glu491 each bind L-methionine. 5-methyltetrahydropteroyltri-L-glutamate is bound by residues 522 to 523 (RC) and Trp568. Position 606 (Asp606) interacts with L-homocysteine. Asp606 serves as a coordination point for L-methionine. Glu612 is a 5-methyltetrahydropteroyltri-L-glutamate binding site. Residues His648, Cys650, and Glu672 each coordinate Zn(2+). His701 acts as the Proton donor in catalysis. A Zn(2+)-binding site is contributed by Cys733.

It belongs to the vitamin-B12 independent methionine synthase family. The cofactor is Zn(2+).

The enzyme catalyses 5-methyltetrahydropteroyltri-L-glutamate + L-homocysteine = tetrahydropteroyltri-L-glutamate + L-methionine. Its pathway is amino-acid biosynthesis; L-methionine biosynthesis via de novo pathway; L-methionine from L-homocysteine (MetE route): step 1/1. Its function is as follows. Catalyzes the transfer of a methyl group from 5-methyltetrahydrofolate to homocysteine resulting in methionine formation. This Parvibaculum lavamentivorans (strain DS-1 / DSM 13023 / NCIMB 13966) protein is 5-methyltetrahydropteroyltriglutamate--homocysteine methyltransferase.